The sequence spans 658 residues: Glycogen debranching enzyme (658 aa).

The active-site Nucleophile is Asp336. Catalysis depends on Glu371, which acts as the Proton donor.

It belongs to the glycosyl hydrolase 13 family.

It carries out the reaction Hydrolysis of (1-&gt;6)-alpha-D-glucosidic linkages to branches with degrees of polymerization of three or four glucose residues in limit dextrin.. Its pathway is glycan degradation; glycogen degradation. Removes maltotriose and maltotetraose chains that are attached by 1,6-alpha-linkage to the limit dextrin main chain, generating a debranched limit dextrin. This Klebsiella pneumoniae (strain 342) protein is Glycogen debranching enzyme.